We begin with the raw amino-acid sequence, 206 residues long: Ribosomal RNA large subunit methyltransferase E (206 aa).

S-adenosyl-L-methionine-binding residues include Gly-60, Trp-62, Asp-80, Asp-96, and Asp-121. The active-site Proton acceptor is the Lys-161.

It belongs to the class I-like SAM-binding methyltransferase superfamily. RNA methyltransferase RlmE family.

The protein localises to the cytoplasm. The enzyme catalyses uridine(2552) in 23S rRNA + S-adenosyl-L-methionine = 2'-O-methyluridine(2552) in 23S rRNA + S-adenosyl-L-homocysteine + H(+). Specifically methylates the uridine in position 2552 of 23S rRNA at the 2'-O position of the ribose in the fully assembled 50S ribosomal subunit. This Francisella tularensis subsp. holarctica (strain FTNF002-00 / FTA) protein is Ribosomal RNA large subunit methyltransferase E.